A 159-amino-acid chain; its full sequence is Small ribosomal subunit protein uS9 (159 aa).

The protein belongs to the universal ribosomal protein uS9 family.

The sequence is that of Small ribosomal subunit protein uS9 from Rickettsia rickettsii (strain Iowa).